A 431-amino-acid chain; its full sequence is Serine--tRNA ligase (431 aa).

An L-serine-binding site is contributed by 235 to 237 (TAE). ATP is bound by residues 266–268 (RRE) and Val282. Glu289 is an L-serine binding site. 353 to 356 (EASS) contributes to the ATP binding site. An L-serine-binding site is contributed by Ser389.

Belongs to the class-II aminoacyl-tRNA synthetase family. Type-1 seryl-tRNA synthetase subfamily. In terms of assembly, homodimer. The tRNA molecule binds across the dimer.

The protein resides in the cytoplasm. The enzyme catalyses tRNA(Ser) + L-serine + ATP = L-seryl-tRNA(Ser) + AMP + diphosphate + H(+). It carries out the reaction tRNA(Sec) + L-serine + ATP = L-seryl-tRNA(Sec) + AMP + diphosphate + H(+). It participates in aminoacyl-tRNA biosynthesis; selenocysteinyl-tRNA(Sec) biosynthesis; L-seryl-tRNA(Sec) from L-serine and tRNA(Sec): step 1/1. Its function is as follows. Catalyzes the attachment of serine to tRNA(Ser). Is also able to aminoacylate tRNA(Sec) with serine, to form the misacylated tRNA L-seryl-tRNA(Sec), which will be further converted into selenocysteinyl-tRNA(Sec). The protein is Serine--tRNA ligase of Chlorobium phaeobacteroides (strain DSM 266 / SMG 266 / 2430).